A 385-amino-acid chain; its full sequence is UPF0284 protein PMM0439 (385 aa).

Belongs to the UPF0284 family.

In Prochlorococcus marinus subsp. pastoris (strain CCMP1986 / NIES-2087 / MED4), this protein is UPF0284 protein PMM0439.